We begin with the raw amino-acid sequence, 103 residues long: Small ribosomal subunit protein uS10 (103 aa).

The protein belongs to the universal ribosomal protein uS10 family. As to quaternary structure, part of the 30S ribosomal subunit.

In terms of biological role, involved in the binding of tRNA to the ribosomes. The sequence is that of Small ribosomal subunit protein uS10 from Bordetella petrii (strain ATCC BAA-461 / DSM 12804 / CCUG 43448).